We begin with the raw amino-acid sequence, 195 residues long: Auxin-responsive protein IAA14 (195 aa).

Disordered regions lie at residues 1 to 61 (MAAE…SPAS) and 85 to 107 (STAAAAKGKGGGETDQGRKNKGG). Residues 10-14 (LRLGL) carry the EAR-like (transcriptional repression) motif. In terms of domain architecture, PB1 spans 108 to 191 (GLYVKVSMDG…SCKKLRIMRG (84 aa)).

The protein belongs to the Aux/IAA family. Homodimers and heterodimers. In terms of tissue distribution, highly expressed in flowers. Expressed in etiolated seedlings.

The protein resides in the nucleus. Its function is as follows. Aux/IAA proteins are short-lived transcriptional factors that function as repressors of early auxin response genes at low auxin concentrations. This is Auxin-responsive protein IAA14 (IAA14) from Oryza sativa subsp. japonica (Rice).